Here is a 250-residue protein sequence, read N- to C-terminus: NAD(P)H-quinone oxidoreductase subunit K (250 aa).

Residues C60, C61, C125, and C156 each coordinate [4Fe-4S] cluster. The disordered stretch occupies residues 230-250 (ELNTPEIDVSPASQSSSTYES). The segment covering 240 to 250 (PASQSSSTYES) has biased composition (polar residues).

It belongs to the complex I 20 kDa subunit family. NDH-1 can be composed of about 15 different subunits; different subcomplexes with different compositions have been identified which probably have different functions. [4Fe-4S] cluster serves as cofactor.

The protein resides in the cellular thylakoid membrane. The enzyme catalyses a plastoquinone + NADH + (n+1) H(+)(in) = a plastoquinol + NAD(+) + n H(+)(out). The catalysed reaction is a plastoquinone + NADPH + (n+1) H(+)(in) = a plastoquinol + NADP(+) + n H(+)(out). In terms of biological role, NDH-1 shuttles electrons from an unknown electron donor, via FMN and iron-sulfur (Fe-S) centers, to quinones in the respiratory and/or the photosynthetic chain. The immediate electron acceptor for the enzyme in this species is believed to be plastoquinone. Couples the redox reaction to proton translocation, and thus conserves the redox energy in a proton gradient. Cyanobacterial NDH-1 also plays a role in inorganic carbon-concentration. The chain is NAD(P)H-quinone oxidoreductase subunit K from Prochlorococcus marinus (strain MIT 9313).